The primary structure comprises 505 residues: Maturase K (505 aa).

This sequence belongs to the intron maturase 2 family. MatK subfamily.

The protein localises to the plastid. The protein resides in the chloroplast. Its function is as follows. Usually encoded in the trnK tRNA gene intron. Probably assists in splicing its own and other chloroplast group II introns. This is Maturase K from Morus alba (White mulberry).